The following is a 90-amino-acid chain: MISSIIGIKFSACIEGCNASLYLRILSFSDIATDVVLFAVSNASIFKVLTMKVMNKIQNTFVDEIYRFTSMFTSFLFVLYKVLRLITISV.

This is an uncharacterized protein from Rickettsia prowazekii (strain Madrid E).